A 610-amino-acid polypeptide reads, in one-letter code: Solute carrier family 23 member 3 (610 aa).

A compositionally biased stretch (polar residues) spans 1–16 (MSRSPLNPSQLRSVGS). Residues 1–32 (MSRSPLNPSQLRSVGSQDALAPLPPPAPQNPS) form a disordered region. The Cytoplasmic segment spans residues 1 to 49 (MSRSPLNPSQLRSVGSQDALAPLPPPAPQNPSTHSWDPLCGSLPWGLSC). Residues 50–70 (LLALQHVLVMASLLCVSHLLL) form a helical membrane-spanning segment. Over 71–85 (LCSLSPGGLSYSPSQ) the chain is Extracellular. Residues 86-106 (LLASSFFSCGMSTILQTWMGS) form a helical membrane-spanning segment. The Cytoplasmic segment spans residues 107–164 (RLPLVQAPSLEFLIPALVLTSQKLPRAIQTPGNSSLMLHLCRGPSCHGLGHWNTSLQE). Residues 165–185 (VSGAVVVSGLLQGMMGLLGSP) form a helical membrane-spanning segment. Residues 186–187 (GH) lie on the Extracellular side of the membrane. The chain crosses the membrane as a helical span at residues 188–208 (VFPHCGPLVLAPSLVVAGLSA). Residues 209-211 (HRE) lie on the Cytoplasmic side of the membrane. The helical transmembrane segment at 212 to 232 (VAQFCFTHWGLALLVILLMVV) threads the bilayer. The Extracellular segment spans residues 233–266 (CSQHLGSCQFHVCPWRRASTSSTHTPLPVFRLLS). Residues 267-287 (VLIPVACVWIVSAFVGFSVIP) form a helical membrane-spanning segment. Topologically, residues 288 to 316 (QELSAPTKAPWIWLPHPGEWNWPLLTPRA) are cytoplasmic. The helical transmembrane segment at 317–337 (LAAGISMALAASTSSLGCYAL) threads the bilayer. Over 338-355 (CGRLLHLPPPPPHACSRG) the chain is Extracellular. The helical transmembrane segment at 356–376 (LSLEGLGSVLAGLLGSPMGTA) threads the bilayer. At 377–394 (SSFPNVGKVGLIQAGSQQ) the chain is on the cytoplasmic side. A helical transmembrane segment spans residues 395–414 (VAHLVGLLCVGLGLSPRLAQ). Residues 415-423 (LLTTIPLPV) lie on the Extracellular side of the membrane. A helical membrane pass occupies residues 424-446 (VGGVLGVTQAVVLSAGFSSFYLA). The Cytoplasmic portion of the chain corresponds to 447-452 (DIDSGR). A helical membrane pass occupies residues 453-472 (NIFIVGFSIFMALLLPRWFR). Topologically, residues 473–486 (EAPVLFSTGWSPLD) are extracellular. Residues 487 to 507 (VLLHSLLTQPIFLAGLSGFLL) traverse the membrane as a helical segment. Over 508 to 610 (ENTIPGTQLE…SSREGFRSQK (103 aa)) the chain is Cytoplasmic. Residues 571-610 (PEDPGDEEGGSSEPEEMADLLPGSGEPCPESSREGFRSQK) are disordered. The span at 573–588 (DPGDEEGGSSEPEEMA) shows a compositional bias: acidic residues. Over residues 601-610 (SSREGFRSQK) the composition is skewed to basic and acidic residues.

The protein belongs to the nucleobase:cation symporter-2 (NCS2) (TC 2.A.40) family.

Its subcellular location is the membrane. It carries out the reaction hypoxanthine(out) + Na(+)(out) = hypoxanthine(in) + Na(+)(in). Functionally, acts as a sodium-dependent hypoxanthine transporter. May show xanthine-hypoxanthine exchange activity. This Homo sapiens (Human) protein is Solute carrier family 23 member 3 (SLC23A3).